The sequence spans 334 residues: tRNA-dihydrouridine(20/20a) synthase (334 aa).

FMN is bound by residues 18–20 and Gln-71; that span reads PMM. Cys-101 (proton donor) is an active-site residue. FMN-binding positions include Lys-140, His-172, 212–214, and 234–235; these read NGG and GR.

This sequence belongs to the Dus family. DusA subfamily. It depends on FMN as a cofactor.

It catalyses the reaction 5,6-dihydrouridine(20) in tRNA + NADP(+) = uridine(20) in tRNA + NADPH + H(+). The catalysed reaction is 5,6-dihydrouridine(20) in tRNA + NAD(+) = uridine(20) in tRNA + NADH + H(+). The enzyme catalyses 5,6-dihydrouridine(20a) in tRNA + NADP(+) = uridine(20a) in tRNA + NADPH + H(+). It carries out the reaction 5,6-dihydrouridine(20a) in tRNA + NAD(+) = uridine(20a) in tRNA + NADH + H(+). Functionally, catalyzes the synthesis of 5,6-dihydrouridine (D), a modified base found in the D-loop of most tRNAs, via the reduction of the C5-C6 double bond in target uridines. Specifically modifies U20 and U20a in tRNAs. This Xanthomonas axonopodis pv. citri (strain 306) protein is tRNA-dihydrouridine(20/20a) synthase.